The chain runs to 88 residues: Small ribosomal subunit protein uS15c (88 aa).

Belongs to the universal ribosomal protein uS15 family. In terms of assembly, part of the 30S ribosomal subunit.

Its subcellular location is the plastid. It is found in the chloroplast. The chain is Small ribosomal subunit protein uS15c (rps15) from Cycas taitungensis (Prince sago).